A 400-amino-acid polypeptide reads, in one-letter code: Diphosphomevalonate decarboxylase (400 aa).

The residue at position 2 (Ala2) is an N-acetylalanine. Residues 23–26, Arg78, 156–161, and Thr212 contribute to the (R)-5-diphosphomevalonate site; these read YWGK and SGSACR.

The protein belongs to the diphosphomevalonate decarboxylase family. In terms of assembly, homodimer.

It localises to the cytoplasm. It catalyses the reaction (R)-5-diphosphomevalonate + ATP = isopentenyl diphosphate + ADP + phosphate + CO2. It functions in the pathway steroid biosynthesis; cholesterol biosynthesis. Catalyzes the ATP dependent decarboxylation of (R)-5-diphosphomevalonate to form isopentenyl diphosphate (IPP). Functions in the mevalonate (MVA) pathway leading to isopentenyl diphosphate (IPP), a key precursor for the biosynthesis of isoprenoids and sterol synthesis. The chain is Diphosphomevalonate decarboxylase (MVD) from Bos taurus (Bovine).